Here is a 336-residue protein sequence, read N- to C-terminus: MSILITGGAGYIGSHTVLTLLEQGRNVVVLDNLINSSAESLARVSKICGRKPNFYHGDILDRSCLKLIFSSHKIDSVIHFAGLKSVGESVEKPIEYYQNNVVGSITLLEEMCLANVKKLIFSSSATVYGEPEFVPLTEKARIGGTTNPYGTSKVMVEQILKDFSLAHPDYSITALRYFNPVGAHPSGLIGEDPNGKPNNLLPFITQVAIGKLSKLLVYGNDYDTPDGSGIRDYIHVMDLAEGHLSTLINLTSGFRIYNLGTGVGYSVLHMIKEFERITGKNIPFDIVSRRPGDIAECWASPELAHLELGWYAKRTLVDMLQDAWKWQKMNPNGYNC.

NAD(+) is bound by residues Tyr-11–Ile-12, Asp-31–Ser-36, Asp-58–Ile-59, Phe-80–Lys-84, Asn-99, Ser-124, Tyr-149, Lys-153, and Phe-178. Ser-124 and Tyr-149 together coordinate substrate. The active-site Proton acceptor is the Tyr-149. Residues Asn-179, Asn-199–Leu-200, Leu-216–Tyr-218, Arg-231, and Arg-290–Asp-293 contribute to the substrate site.

It belongs to the NAD(P)-dependent epimerase/dehydratase family. Homodimer. Requires NAD(+) as cofactor.

The enzyme catalyses UDP-alpha-D-glucose = UDP-alpha-D-galactose. The protein operates within carbohydrate metabolism; galactose metabolism. Its function is as follows. Involved in the metabolism of galactose. Catalyzes the conversion of UDP-galactose (UDP-Gal) to UDP-glucose (UDP-Glc) through a mechanism involving the transient reduction of NAD. The polypeptide is UDP-glucose 4-epimerase (galE) (Yersinia enterocolitica).